The sequence spans 149 residues: SsrA-binding protein (149 aa).

This sequence belongs to the SmpB family.

It localises to the cytoplasm. Its function is as follows. Required for rescue of stalled ribosomes mediated by trans-translation. Binds to transfer-messenger RNA (tmRNA), required for stable association of tmRNA with ribosomes. tmRNA and SmpB together mimic tRNA shape, replacing the anticodon stem-loop with SmpB. tmRNA is encoded by the ssrA gene; the 2 termini fold to resemble tRNA(Ala) and it encodes a 'tag peptide', a short internal open reading frame. During trans-translation Ala-aminoacylated tmRNA acts like a tRNA, entering the A-site of stalled ribosomes, displacing the stalled mRNA. The ribosome then switches to translate the ORF on the tmRNA; the nascent peptide is terminated with the 'tag peptide' encoded by the tmRNA and targeted for degradation. The ribosome is freed to recommence translation, which seems to be the essential function of trans-translation. The polypeptide is SsrA-binding protein (Anaplasma marginale (strain St. Maries)).